Reading from the N-terminus, the 132-residue chain is Translation initiation factor 5A (132 aa).

Lys37 carries the post-translational modification Hypusine.

Belongs to the eIF-5A family.

The protein resides in the cytoplasm. In terms of biological role, functions by promoting the formation of the first peptide bond. The chain is Translation initiation factor 5A (eif5a) from Methanocaldococcus jannaschii (strain ATCC 43067 / DSM 2661 / JAL-1 / JCM 10045 / NBRC 100440) (Methanococcus jannaschii).